The following is a 335-amino-acid chain: Probable nicotianamine synthase 2 (335 aa).

This sequence belongs to the nicotianamine synthase (NAS)-like family.

The enzyme catalyses 3 S-adenosyl-L-methionine = nicotianamine + 3 S-methyl-5'-thioadenosine + 3 H(+). Synthesizes nicotianamine, a polyamine that is the first intermediate in the synthesis of the phytosiderophores of the mugineic acid type found in gramineae which serves as a sensor for the physiological iron status within the plant, and/or might be involved in the transport of iron. This is Probable nicotianamine synthase 2 (NAS2) from Hordeum vulgare (Barley).